Here is a 221-residue protein sequence, read N- to C-terminus: Small ribosomal subunit protein uS2 (221 aa).

Belongs to the universal ribosomal protein uS2 family.

This Methanococcus maripaludis (strain C6 / ATCC BAA-1332) protein is Small ribosomal subunit protein uS2.